Consider the following 916-residue polypeptide: Translation initiation factor IF-2 (916 aa).

The tract at residues Asn50 to Lys326 is disordered. Over residues Ala109 to Thr241 the composition is skewed to basic and acidic residues. A compositionally biased stretch (basic residues) spans Gly277–Asn291. Over residues Arg292 to Ala304 the composition is skewed to basic and acidic residues. In terms of domain architecture, tr-type G spans Ser415–Lys584. The tract at residues Gly424–Thr431 is G1. Position 424–431 (Gly424–Thr431) interacts with GTP. Residues Gly449 to His453 form a G2 region. The tract at residues Asp470–Gly473 is G3. Residues Asp470–His474 and Asn524–Asp527 contribute to the GTP site. A G4 region spans residues Asn524 to Asp527. The tract at residues Ser560–Lys562 is G5.

Belongs to the TRAFAC class translation factor GTPase superfamily. Classic translation factor GTPase family. IF-2 subfamily.

The protein resides in the cytoplasm. In terms of biological role, one of the essential components for the initiation of protein synthesis. Protects formylmethionyl-tRNA from spontaneous hydrolysis and promotes its binding to the 30S ribosomal subunits. Also involved in the hydrolysis of GTP during the formation of the 70S ribosomal complex. This is Translation initiation factor IF-2 from Proteus mirabilis (strain HI4320).